Consider the following 235-residue polypeptide: Leucyl/phenylalanyl-tRNA--protein transferase (235 aa).

The protein belongs to the L/F-transferase family.

It localises to the cytoplasm. It carries out the reaction N-terminal L-lysyl-[protein] + L-leucyl-tRNA(Leu) = N-terminal L-leucyl-L-lysyl-[protein] + tRNA(Leu) + H(+). The catalysed reaction is N-terminal L-arginyl-[protein] + L-leucyl-tRNA(Leu) = N-terminal L-leucyl-L-arginyl-[protein] + tRNA(Leu) + H(+). The enzyme catalyses L-phenylalanyl-tRNA(Phe) + an N-terminal L-alpha-aminoacyl-[protein] = an N-terminal L-phenylalanyl-L-alpha-aminoacyl-[protein] + tRNA(Phe). Functionally, functions in the N-end rule pathway of protein degradation where it conjugates Leu, Phe and, less efficiently, Met from aminoacyl-tRNAs to the N-termini of proteins containing an N-terminal arginine or lysine. This chain is Leucyl/phenylalanyl-tRNA--protein transferase, found in Methylococcus capsulatus (strain ATCC 33009 / NCIMB 11132 / Bath).